We begin with the raw amino-acid sequence, 177 residues long: Nucleoside triphosphate/diphosphate phosphatase (177 aa).

Arginine 23 serves as the catalytic Proton donor. Mg(2+) is bound by residues asparagine 87, aspartate 103, aspartate 105, aspartate 107, aspartate 120, and glutamate 123.

This sequence belongs to the Ntdp family. It depends on Mg(2+) as a cofactor.

It carries out the reaction a ribonucleoside 5'-triphosphate + H2O = a ribonucleoside 5'-diphosphate + phosphate + H(+). The catalysed reaction is a ribonucleoside 5'-diphosphate + H2O = a ribonucleoside 5'-phosphate + phosphate + H(+). Its function is as follows. Has nucleoside phosphatase activity towards nucleoside triphosphates and nucleoside diphosphates. The polypeptide is Nucleoside triphosphate/diphosphate phosphatase (Streptococcus pneumoniae serotype 2 (strain D39 / NCTC 7466)).